Consider the following 143-residue polypeptide: Large ribosomal subunit protein uL11 (143 aa).

Belongs to the universal ribosomal protein uL11 family. In terms of assembly, part of the ribosomal stalk of the 50S ribosomal subunit. Interacts with L10 and the large rRNA to form the base of the stalk. L10 forms an elongated spine to which L12 dimers bind in a sequential fashion forming a multimeric L10(L12)X complex. One or more lysine residues are methylated.

In terms of biological role, forms part of the ribosomal stalk which helps the ribosome interact with GTP-bound translation factors. The sequence is that of Large ribosomal subunit protein uL11 from Beutenbergia cavernae (strain ATCC BAA-8 / DSM 12333 / CCUG 43141 / JCM 11478 / NBRC 16432 / NCIMB 13614 / HKI 0122).